A 347-amino-acid polypeptide reads, in one-letter code: S-adenosylmethionine:tRNA ribosyltransferase-isomerase (347 aa).

The protein belongs to the QueA family. Monomer.

The protein localises to the cytoplasm. It carries out the reaction 7-aminomethyl-7-carbaguanosine(34) in tRNA + S-adenosyl-L-methionine = epoxyqueuosine(34) in tRNA + adenine + L-methionine + 2 H(+). The protein operates within tRNA modification; tRNA-queuosine biosynthesis. Transfers and isomerizes the ribose moiety from AdoMet to the 7-aminomethyl group of 7-deazaguanine (preQ1-tRNA) to give epoxyqueuosine (oQ-tRNA). This is S-adenosylmethionine:tRNA ribosyltransferase-isomerase from Gluconobacter oxydans (strain 621H) (Gluconobacter suboxydans).